The chain runs to 124 residues: SPbeta prophage-derived uncharacterized protein YoqO (124 aa).

2 helical membrane passes run L54–F74 and V88–M108.

It is found in the cell membrane. This chain is SPbeta prophage-derived uncharacterized protein YoqO (yoqO), found in Bacillus subtilis (strain 168).